The sequence spans 476 residues: MKPTLPNYDQSSVLIVGDVMLDRYWGGPTSRISPEAPVPVVKVEKIEERPGGAANVAMNIAALGGDAHLVGLVGEDEPAQALTTTLESLKVHCDFVALPEFPTITKLRVMSRGQQLIRLDFEDSFHDVAAEPIISRMQQALSSVKAVVLSDYAKGALEHVQSMIQEARKVNVPVFIDPKGADFERYRGATLLTPNMLEFETVVGKVKDEDDLVAKGQQIIEEFDFEALLVTRSEHGMTLLRRNMEPLHLPTQAREVFDVTGAGDTVISVLAASVSTGKPLDEACALANAAAGVVVGKLGTSTLSTIELAEAIHGSQDSGFGIIGEEQLISAVKQARARGEKVVMTNGCFDILHAGHVSYLNHAAELGDRLIVAVNTNESVQRLKGPGRPINPTDRRMAVLAGLGAVDWVVPFSEDTPQRLISQVLPSLLVKGGDYAIEDIAGGAEVIAAGGEVKVLNFEDGCSTTGIIEAIKGGRG.

Residues 1–318 form a ribokinase region; sequence MKPTLPNYDQ…AEAIHGSQDS (318 aa). 195–198 serves as a coordination point for ATP; the sequence is NMLE. Asp264 is an active-site residue. Positions 344 to 476 are cytidylyltransferase; the sequence is MTNGCFDILH…IIEAIKGGRG (133 aa).

The protein in the N-terminal section; belongs to the carbohydrate kinase PfkB family. In the C-terminal section; belongs to the cytidylyltransferase family. As to quaternary structure, homodimer.

It catalyses the reaction D-glycero-beta-D-manno-heptose 7-phosphate + ATP = D-glycero-beta-D-manno-heptose 1,7-bisphosphate + ADP + H(+). The catalysed reaction is D-glycero-beta-D-manno-heptose 1-phosphate + ATP + H(+) = ADP-D-glycero-beta-D-manno-heptose + diphosphate. It participates in nucleotide-sugar biosynthesis; ADP-L-glycero-beta-D-manno-heptose biosynthesis; ADP-L-glycero-beta-D-manno-heptose from D-glycero-beta-D-manno-heptose 7-phosphate: step 1/4. Its pathway is nucleotide-sugar biosynthesis; ADP-L-glycero-beta-D-manno-heptose biosynthesis; ADP-L-glycero-beta-D-manno-heptose from D-glycero-beta-D-manno-heptose 7-phosphate: step 3/4. In terms of biological role, catalyzes the phosphorylation of D-glycero-D-manno-heptose 7-phosphate at the C-1 position to selectively form D-glycero-beta-D-manno-heptose-1,7-bisphosphate. Catalyzes the ADP transfer from ATP to D-glycero-beta-D-manno-heptose 1-phosphate, yielding ADP-D-glycero-beta-D-manno-heptose. The chain is Bifunctional protein HldE from Aliivibrio fischeri (strain MJ11) (Vibrio fischeri).